Here is a 933-residue protein sequence, read N- to C-terminus: Clumping factor A (933 aa).

Positions 1–39 (MNMKKKEKHAIRKKSIGVASVLVGTLIGFGLLSSKEADA) are cleaved as a signal peptide. Positions 9 to 20 (HAIRKKSIGVAS) match the YSIRK-G/S signaling motif motif. 2 disordered regions span residues 34–200 (SKEA…SNKD) and 529–904 (FNNG…SEDE). The ligand binding A region stretch occupies residues 40 to 542 (SENSVTQSDS…SGSGDGIDKP (503 aa)). The segment covering 47–65 (SDSASNESKSNDSSSVSAA) has biased composition (low complexity). The segment covering 71-105 (TNVSDTKTSSNTNNGETSVAQNPAQQETTQSSSTN) has biased composition (polar residues). The segment covering 106–132 (ATTEETPVTGEATTTTTNQANTPATTQ) has biased composition (low complexity). Polar residues predominate over residues 133 to 200 (SSNTNAEELV…PQSTDASNKD (68 aa)). The segment covering 547-565 (QPDEPGEIEPIPEDSDSDP) has biased composition (acidic residues). Positions 566-598 (GSDSGSDSNSDSGSDSGSDSTSDSGSDSASDSD) are enriched in low complexity. Positions 599 to 861 (SASDSDSASD…DSDSESDSNS (263 aa)) are enriched in acidic residues. A compositionally biased stretch (low complexity) spans 862–880 (DSESGSNNNVVPPNSPKNG). Basic and acidic residues predominate over residues 887–896 (NEAKDSKEPL). The LPXTG sorting signal motif lies at 896 to 900 (LPDTG). Residue threonine 899 is modified to Pentaglycyl murein peptidoglycan amidated threonine. Residues 900-933 (GSEDEANTSLIWGLLASIGSLLLFRRKKENKDKK) constitute a propeptide, removed by sortase.

It belongs to the serine-aspartate repeat-containing protein (SDr) family.

The protein resides in the secreted. The protein localises to the cell wall. Functionally, cell surface-associated protein implicated in virulence. Promotes bacterial attachment exclusively to the gamma-chain of human fibrinogen. Induces formation of bacterial clumps, which diminish the ability of group IIA phospholipase A2 to cause bacterial phospholipid hydrolysis and killing. Significantly decreases macrophage phagocytosis possibly thanks to the clumps, clumped bacteria being too large to be phagocytosed. Dominant factor responsible for human platelet aggregation, which may be an important mechanism for initiating infective endocarditis. Enhances spleen cell proliferative response in vitro, contributing significantly to the immunostimulatory activity of S.aureus. The protein is Clumping factor A (clfA) of Staphylococcus aureus (strain Newman).